Consider the following 649-residue polypeptide: tRNA-guanine(15) transglycosylase (649 aa).

Residue D88 is the Nucleophile of the active site. Residues D123 and A194 each coordinate substrate. 3 residues coordinate Zn(2+): C280, C282, and C285. The PUA domain maps to 573 to 648 (NYRIVIDSSV…VAATLRGGIK (76 aa)).

The protein belongs to the archaeosine tRNA-ribosyltransferase family. The cofactor is Zn(2+).

It catalyses the reaction guanosine(15) in tRNA + 7-cyano-7-deazaguanine = 7-cyano-7-carbaguanosine(15) in tRNA + guanine. It functions in the pathway tRNA modification; archaeosine-tRNA biosynthesis. Its function is as follows. Exchanges the guanine residue with 7-cyano-7-deazaguanine (preQ0) at position 15 in the dihydrouridine loop (D-loop) of archaeal tRNAs. In Methanococcus maripaludis (strain C5 / ATCC BAA-1333), this protein is tRNA-guanine(15) transglycosylase.